The chain runs to 548 residues: ATP synthase subunit alpha (548 aa).

172-179 serves as a coordination point for ATP; it reads GDRKTGKT. The interval 526–548 is disordered; it reads AEAMDEADVEKESVKVRKPAPKK.

It belongs to the ATPase alpha/beta chains family. As to quaternary structure, F-type ATPases have 2 components, CF(1) - the catalytic core - and CF(0) - the membrane proton channel. CF(1) has five subunits: alpha(3), beta(3), gamma(1), delta(1), epsilon(1). CF(0) has three main subunits: a(1), b(2) and c(9-12). The alpha and beta chains form an alternating ring which encloses part of the gamma chain. CF(1) is attached to CF(0) by a central stalk formed by the gamma and epsilon chains, while a peripheral stalk is formed by the delta and b chains.

Its subcellular location is the cell membrane. The catalysed reaction is ATP + H2O + 4 H(+)(in) = ADP + phosphate + 5 H(+)(out). Produces ATP from ADP in the presence of a proton gradient across the membrane. The alpha chain is a regulatory subunit. The protein is ATP synthase subunit alpha of Mycolicibacterium vanbaalenii (strain DSM 7251 / JCM 13017 / BCRC 16820 / KCTC 9966 / NRRL B-24157 / PYR-1) (Mycobacterium vanbaalenii).